A 677-amino-acid chain; its full sequence is UvrABC system protein B (677 aa).

The Helicase ATP-binding domain maps to 26–414 (DNLDAGLAHQ…SGNEVVEQVV (389 aa)). 39 to 46 (GVTGSGKT) provides a ligand contact to ATP. The Beta-hairpin motif lies at 92-115 (YYDYYQPEAYVPTTDTFIEKDASI). Residues 432–598 (QVDDLMSEIR…GLNKDITDVM (167 aa)) enclose the Helicase C-terminal domain. A UVR domain is found at 637–672 (MKEIDAKEKEMYKAAQNLEFEQAGKLRDEVAELREQ).

It belongs to the UvrB family. In terms of assembly, forms a heterotetramer with UvrA during the search for lesions. Interacts with UvrC in an incision complex.

Its subcellular location is the cytoplasm. In terms of biological role, the UvrABC repair system catalyzes the recognition and processing of DNA lesions. A damage recognition complex composed of 2 UvrA and 2 UvrB subunits scans DNA for abnormalities. Upon binding of the UvrA(2)B(2) complex to a putative damaged site, the DNA wraps around one UvrB monomer. DNA wrap is dependent on ATP binding by UvrB and probably causes local melting of the DNA helix, facilitating insertion of UvrB beta-hairpin between the DNA strands. Then UvrB probes one DNA strand for the presence of a lesion. If a lesion is found the UvrA subunits dissociate and the UvrB-DNA preincision complex is formed. This complex is subsequently bound by UvrC and the second UvrB is released. If no lesion is found, the DNA wraps around the other UvrB subunit that will check the other stand for damage. The sequence is that of UvrABC system protein B from Idiomarina loihiensis (strain ATCC BAA-735 / DSM 15497 / L2-TR).